A 202-amino-acid chain; its full sequence is NADH-quinone oxidoreductase subunit B (202 aa).

Cysteine 81, cysteine 82, cysteine 146, and cysteine 176 together coordinate [4Fe-4S] cluster.

The protein belongs to the complex I 20 kDa subunit family. As to quaternary structure, NDH-1 is composed of 14 different subunits. Subunits NuoB, C, D, E, F, and G constitute the peripheral sector of the complex. [4Fe-4S] cluster is required as a cofactor.

It is found in the cell inner membrane. It carries out the reaction a quinone + NADH + 5 H(+)(in) = a quinol + NAD(+) + 4 H(+)(out). Functionally, NDH-1 shuttles electrons from NADH, via FMN and iron-sulfur (Fe-S) centers, to quinones in the respiratory chain. The immediate electron acceptor for the enzyme in this species is believed to be ubiquinone. Couples the redox reaction to proton translocation (for every two electrons transferred, four hydrogen ions are translocated across the cytoplasmic membrane), and thus conserves the redox energy in a proton gradient. This is NADH-quinone oxidoreductase subunit B from Bradyrhizobium diazoefficiens (strain JCM 10833 / BCRC 13528 / IAM 13628 / NBRC 14792 / USDA 110).